Here is a 111-residue protein sequence, read N- to C-terminus: Cell cycle protein GpsB (111 aa).

Positions 38–72 (IKDYEAFHKEFEQLKQQNARLKRELEEQKLAVTQV) form a coiled coil.

This sequence belongs to the GpsB family. In terms of assembly, forms polymers through the coiled coil domains. Interacts with PBP1, MreC and EzrA.

The protein resides in the cytoplasm. Divisome component that associates with the complex late in its assembly, after the Z-ring is formed, and is dependent on DivIC and PBP2B for its recruitment to the divisome. Together with EzrA, is a key component of the system that regulates PBP1 localization during cell cycle progression. Its main role could be the removal of PBP1 from the cell pole after pole maturation is completed. Also contributes to the recruitment of PBP1 to the division complex. Not essential for septum formation. This is Cell cycle protein GpsB from Bacillus cereus (strain G9842).